Reading from the N-terminus, the 498-residue chain is Sugar transport protein 2 (498 aa).

The Cytoplasmic portion of the chain corresponds to 1-22 (MAVGSMNVEEGTKAFPAKLTGQ). A run of 12 helical transmembrane segments spans residues 23–43 (VFLC…DIGI), 80–100 (LLQL…FISS), 117–137 (IFFL…MLIG), 140–160 (ILLG…ISEI), 167–187 (GGLN…ASYV), 200–220 (YSLG…FFIH), 288–308 (LQFF…PVLF), 320–340 (ISTV…LLVV), 348–368 (LLME…GILL), 381–401 (AVPL…AWSW), 421–441 (GYFC…QFFL), and 450–470 (LLFF…VFFL). Residues 471–498 (PETKGVPIEEMAEKRWKTHPRWKKYFKD) are Cytoplasmic-facing.

This sequence belongs to the major facilitator superfamily. Sugar transporter (TC 2.A.1.1) family. Pollen specific (at protein level).

The protein resides in the membrane. Its function is as follows. Mediates an active uptake of hexoses, probably by sugar/hydrogen symport. Can transport glucose, 3-O-methylglucose, xylose, mannose, fructose and galactose. The sequence is that of Sugar transport protein 2 (STP2) from Arabidopsis thaliana (Mouse-ear cress).